The primary structure comprises 111 residues: Ig kappa chain V-III region MOPC 70 (111 aa).

A framework-1 region spans residues 1–23; it reads DIVLTQSPASLAVSLGQRATISC. A disulfide bridge links Cys-23 with Cys-92. The segment at 24–38 is complementarity-determining-1; it reads RASESVDNSGISFMN. A framework-2 region spans residues 39–53; that stretch reads WFQQKPGQPPKLLIY. The tract at residues 54–60 is complementarity-determining-2; it reads AASNQGS. The tract at residues 61–92 is framework-3; that stretch reads GVPARFSGSGSGTDFSLNIHPMEEDDTAMYFC. The complementarity-determining-3 stretch occupies residues 93–101; sequence QQSKEVPWT. The tract at residues 102–111 is framework-4; that stretch reads FGGGTKLEIK.

This is Ig kappa chain V-III region MOPC 70 from Mus musculus (Mouse).